Here is a 144-residue protein sequence, read N- to C-terminus: Large ribosomal subunit protein uL16 (144 aa).

The protein belongs to the universal ribosomal protein uL16 family. Part of the 50S ribosomal subunit.

In terms of biological role, binds 23S rRNA and is also seen to make contacts with the A and possibly P site tRNAs. In Bacillus licheniformis (strain ATCC 14580 / DSM 13 / JCM 2505 / CCUG 7422 / NBRC 12200 / NCIMB 9375 / NCTC 10341 / NRRL NRS-1264 / Gibson 46), this protein is Large ribosomal subunit protein uL16.